Here is a 610-residue protein sequence, read N- to C-terminus: MCGIVGAVAQRDVAEILVQGLRRLEYRGYDSAGVAVVDSDKQLTRLRRLGKVQELADAVEAAQVAGGTGIAHTRWATHGEPSEINAHPHISGDITVVHNGIIENHEMLRTMLQDRGYVFTSQTDTEVIAHLVEWELRSASSLLEAVQTTVKQLTGAYGTVVMDRNDPSRLVVARSGSPIVIGFGIGENFLASDQLALLNVTRRFMYLEEGDVAEMTRRDVRVFDALGQPVQREISESNLEHDAADKGHYRHYMQKEIFEQPKALINTMEGRITHDCVVVESIGVHAAEILAKVEHVQIVACGTSYNAGMTARYWFESLAGVSCDVEIASEFRYRKFVTRPNSLLITLSQSGETADTLAALRLAKEKGYMAAMTICNVAGSSLVRESDFAFMTRAGTEIGVASTKAFTTQLVTLLMLVTALGKQQQRIGRELEAEIVHALHQLPKQIETALSFEKQIETLAEDFADKHHTLFLGRGEYYPIAVEASLKLKEISYIHAEAYAAGELKHGPLALIDADMPVVVVAPSNELLEKLKSNIEEVRARGGLLYVFADEVAGFEADETMKIIAMPHVSEIVAPIYYTIPMQLLSYHVALIKGTDVDQPRNLAKAVTVE.

The Nucleophile; for GATase activity role is filled by C2. Residues 2-218 (CGIVGAVAQR…EGDVAEMTRR (217 aa)) form the Glutamine amidotransferase type-2 domain. SIS domains follow at residues 286–426 (AAEI…QQQR) and 459–600 (LAED…VDQP). Residue K605 is the For Fru-6P isomerization activity of the active site.

In terms of assembly, homodimer.

It localises to the cytoplasm. The enzyme catalyses D-fructose 6-phosphate + L-glutamine = D-glucosamine 6-phosphate + L-glutamate. In terms of biological role, catalyzes the first step in hexosamine metabolism, converting fructose-6P into glucosamine-6P using glutamine as a nitrogen source. The sequence is that of Glutamine--fructose-6-phosphate aminotransferase [isomerizing] from Vibrio cholerae serotype O1 (strain ATCC 39315 / El Tor Inaba N16961).